The chain runs to 124 residues: Glutaredoxin-2 (124 aa).

Cysteines 13 and 16 form a disulfide.

Belongs to the glutaredoxin family. As to quaternary structure, homodimer.

It localises to the host cytoplasm. Functionally, glutaredoxin necessary for virion morphogenesis and virus replication. Functions as a thiol-disulfide transfer protein between membrane-associated OPG128 and substrates OPG095 or OPG053. The complete pathway for formation of disulfide bonds in intracellular virion membrane proteins sequentially involves oxidation of OPG072, OPG128 and OPG088. Exhibit thioltransferase and dehydroascorbate reductase activities in vitro. This chain is Glutaredoxin-2 (OPG088), found in Camelus.